A 475-amino-acid polypeptide reads, in one-letter code: Sulfate adenylyltransferase subunit 1 (475 aa).

Residues 25–241 form the tr-type G domain; it reads KSLLRFLTCG…LENIEIQRVV (217 aa). Residues 34–41 are G1; sequence GSVDDGKS. Residue 34–41 coordinates GTP; the sequence is GSVDDGKS. Residues 92 to 96 form a G2 region; that stretch reads GITID. The interval 113–116 is G3; the sequence is DTPG. GTP contacts are provided by residues 113–117 and 168–171; these read DTPGH and NKMD. The segment at 168-171 is G4; the sequence is NKMD. The segment at 206–208 is G5; that stretch reads SAL.

It belongs to the TRAFAC class translation factor GTPase superfamily. Classic translation factor GTPase family. CysN/NodQ subfamily. In terms of assembly, heterodimer composed of CysD, the smaller subunit, and CysN.

The catalysed reaction is sulfate + ATP + H(+) = adenosine 5'-phosphosulfate + diphosphate. Its pathway is sulfur metabolism; hydrogen sulfide biosynthesis; sulfite from sulfate: step 1/3. With CysD forms the ATP sulfurylase (ATPS) that catalyzes the adenylation of sulfate producing adenosine 5'-phosphosulfate (APS) and diphosphate, the first enzymatic step in sulfur assimilation pathway. APS synthesis involves the formation of a high-energy phosphoric-sulfuric acid anhydride bond driven by GTP hydrolysis by CysN coupled to ATP hydrolysis by CysD. This is Sulfate adenylyltransferase subunit 1 from Cronobacter sakazakii (strain ATCC BAA-894) (Enterobacter sakazakii).